Here is a 198-residue protein sequence, read N- to C-terminus: Nucleoid occlusion factor SlmA (198 aa).

Residues 10–70 (NRREEILQSL…SLIEFIEDSL (61 aa)) enclose the HTH tetR-type domain. Residues 33–52 (TTAKLAASVGVSEAALYRHF) constitute a DNA-binding region (H-T-H motif). Residues 117–144 (EQDRLQGRINQLFERIEAQLRQVLREKR) are a coiled coil.

Belongs to the nucleoid occlusion factor SlmA family. As to quaternary structure, homodimer. Interacts with FtsZ.

Its subcellular location is the cytoplasm. It localises to the nucleoid. Required for nucleoid occlusion (NO) phenomenon, which prevents Z-ring formation and cell division over the nucleoid. Acts as a DNA-associated cell division inhibitor that binds simultaneously chromosomal DNA and FtsZ, and disrupts the assembly of FtsZ polymers. SlmA-DNA-binding sequences (SBS) are dispersed on non-Ter regions of the chromosome, preventing FtsZ polymerization at these regions. In Citrobacter koseri (strain ATCC BAA-895 / CDC 4225-83 / SGSC4696), this protein is Nucleoid occlusion factor SlmA.